The primary structure comprises 193 residues: Dual-action ribosomal maturation protein DarP (193 aa).

The segment covering M1–E10 has biased composition (basic and acidic residues). 2 disordered regions span residues M1–R20 and Q171–E193. Acidic residues predominate over residues G181 to E193.

This sequence belongs to the DarP family.

The protein resides in the cytoplasm. Functionally, member of a network of 50S ribosomal subunit biogenesis factors which assembles along the 30S-50S interface, preventing incorrect 23S rRNA structures from forming. Promotes peptidyl transferase center (PTC) maturation. The protein is Dual-action ribosomal maturation protein DarP of Xanthomonas oryzae pv. oryzae (strain KACC10331 / KXO85).